We begin with the raw amino-acid sequence, 234 residues long: Leucyl/phenylalanyl-tRNA--protein transferase (234 aa).

This sequence belongs to the L/F-transferase family.

Its subcellular location is the cytoplasm. It catalyses the reaction N-terminal L-lysyl-[protein] + L-leucyl-tRNA(Leu) = N-terminal L-leucyl-L-lysyl-[protein] + tRNA(Leu) + H(+). The catalysed reaction is N-terminal L-arginyl-[protein] + L-leucyl-tRNA(Leu) = N-terminal L-leucyl-L-arginyl-[protein] + tRNA(Leu) + H(+). It carries out the reaction L-phenylalanyl-tRNA(Phe) + an N-terminal L-alpha-aminoacyl-[protein] = an N-terminal L-phenylalanyl-L-alpha-aminoacyl-[protein] + tRNA(Phe). Functionally, functions in the N-end rule pathway of protein degradation where it conjugates Leu, Phe and, less efficiently, Met from aminoacyl-tRNAs to the N-termini of proteins containing an N-terminal arginine or lysine. The sequence is that of Leucyl/phenylalanyl-tRNA--protein transferase from Salmonella gallinarum (strain 287/91 / NCTC 13346).